We begin with the raw amino-acid sequence, 344 residues long: Biotin synthase (344 aa).

The Radical SAM core domain occupies 36–260 (NQIQISTLLS…MMPTSYIRLS (225 aa)). [4Fe-4S] cluster-binding residues include Cys-51, Cys-55, and Cys-58. Residues Cys-95, Cys-126, Cys-186, and Arg-258 each coordinate [2Fe-2S] cluster.

Belongs to the radical SAM superfamily. Biotin synthase family. In terms of assembly, homodimer. [4Fe-4S] cluster serves as cofactor. Requires [2Fe-2S] cluster as cofactor.

It carries out the reaction (4R,5S)-dethiobiotin + (sulfur carrier)-SH + 2 reduced [2Fe-2S]-[ferredoxin] + 2 S-adenosyl-L-methionine = (sulfur carrier)-H + biotin + 2 5'-deoxyadenosine + 2 L-methionine + 2 oxidized [2Fe-2S]-[ferredoxin]. Its pathway is cofactor biosynthesis; biotin biosynthesis; biotin from 7,8-diaminononanoate: step 2/2. In terms of biological role, catalyzes the conversion of dethiobiotin (DTB) to biotin by the insertion of a sulfur atom into dethiobiotin via a radical-based mechanism. The sequence is that of Biotin synthase from Buchnera aphidicola subsp. Baizongia pistaciae (strain Bp).